A 130-amino-acid chain; its full sequence is Small ribosomal subunit protein uS9 (130 aa).

The protein belongs to the universal ribosomal protein uS9 family.

The protein is Small ribosomal subunit protein uS9 of Exiguobacterium sibiricum (strain DSM 17290 / CCUG 55495 / CIP 109462 / JCM 13490 / 255-15).